A 627-amino-acid polypeptide reads, in one-letter code: tRNA uridine 5-carboxymethylaminomethyl modification enzyme MnmG (627 aa).

Residues 13-18 (GGGHAG), Val-125, and Ser-180 each bind FAD. Residue 274-288 (GPRYCPSIEDKVVRF) coordinates NAD(+). Gln-371 is an FAD binding site.

The protein belongs to the MnmG family. Homodimer. Heterotetramer of two MnmE and two MnmG subunits. Requires FAD as cofactor.

Its subcellular location is the cytoplasm. In terms of biological role, NAD-binding protein involved in the addition of a carboxymethylaminomethyl (cmnm) group at the wobble position (U34) of certain tRNAs, forming tRNA-cmnm(5)s(2)U34. The sequence is that of tRNA uridine 5-carboxymethylaminomethyl modification enzyme MnmG from Francisella tularensis subsp. tularensis (strain WY96-3418).